The chain runs to 256 residues: Putative adhesin P1-like protein MPN_132 (256 aa).

The span at 56-72 (AVSESQAATSSTTTTAT) shows a compositional bias: low complexity. 2 disordered regions span residues 56–115 (AVSE…PYLH) and 149–235 (FGTD…EVVG). Polar residues predominate over residues 96–112 (KASTQGSGQTNSQNTSP). 2 stretches are compositionally biased toward low complexity: residues 155–179 (TQPQ…LGSV) and 211–222 (STSDGNTSSTNN).

Belongs to the adhesin P1 family.

The chain is Putative adhesin P1-like protein MPN_132 from Mycoplasma pneumoniae (strain ATCC 29342 / M129 / Subtype 1) (Mycoplasmoides pneumoniae).